We begin with the raw amino-acid sequence, 226 residues long: Leucyl/phenylalanyl-tRNA--protein transferase (226 aa).

This sequence belongs to the L/F-transferase family.

It localises to the cytoplasm. It carries out the reaction N-terminal L-lysyl-[protein] + L-leucyl-tRNA(Leu) = N-terminal L-leucyl-L-lysyl-[protein] + tRNA(Leu) + H(+). The enzyme catalyses N-terminal L-arginyl-[protein] + L-leucyl-tRNA(Leu) = N-terminal L-leucyl-L-arginyl-[protein] + tRNA(Leu) + H(+). The catalysed reaction is L-phenylalanyl-tRNA(Phe) + an N-terminal L-alpha-aminoacyl-[protein] = an N-terminal L-phenylalanyl-L-alpha-aminoacyl-[protein] + tRNA(Phe). Its function is as follows. Functions in the N-end rule pathway of protein degradation where it conjugates Leu, Phe and, less efficiently, Met from aminoacyl-tRNAs to the N-termini of proteins containing an N-terminal arginine or lysine. The polypeptide is Leucyl/phenylalanyl-tRNA--protein transferase (Pseudomonas fluorescens (strain Pf0-1)).